Here is a 408-residue protein sequence, read N- to C-terminus: MKNQLIDRLTRYTTIDTQSDPKSTTTPSTEKQWDLLHLLERELQQLGLPTDLDENGYLFATLESNIDADVPTVGFLAHVDTSPDFNASNVKPQIIENYDSKPYKLGNTKRVLDPKVFPELNSLVGHTLMVTDGTSLLGADDKAGIVEIMEAICYLQEHPEIKHGTIRIGFTPDEEIGRGPHKFDVDRFNADFAYTMDGSQYGELQYESFNAAEAVITCHGVNVHPGSAKNAMVNAIRLGEQFDSLLPDSEVPERTEGYEGFYHLMNFEGTVEKATLQYIIRDHDKKQFELRKKRILEIRDDINAHFENYPVKVDISDQYFNMAEKILPLPHIIDIPKRVFAKLDIPANTEPIRGGTDGSQLSFMGLPTPNIFTGCGNFHGPYEYASIDVMEKAVQVIIGIVEDIAENN.

Position 78 (histidine 78) interacts with Zn(2+). Aspartate 80 is an active-site residue. Aspartate 140 contacts Zn(2+). Glutamate 174 (proton acceptor) is an active-site residue. 3 residues coordinate Zn(2+): glutamate 175, aspartate 197, and histidine 379.

Belongs to the peptidase M20B family. Zn(2+) serves as cofactor.

The protein localises to the cytoplasm. The catalysed reaction is Release of the N-terminal residue from a tripeptide.. Its function is as follows. Cleaves the N-terminal amino acid of tripeptides. The sequence is that of Peptidase T from Staphylococcus aureus (strain bovine RF122 / ET3-1).